A 64-amino-acid polypeptide reads, in one-letter code: Large ribosomal subunit protein bL35 (64 aa).

Residues 1-14 are compositionally biased toward basic residues; sequence MKNKTHKGTAKRVK. Residues 1–30 form a disordered region; it reads MKNKTHKGTAKRVKVTGSGKLVREQANRRH. Residues 21–30 are compositionally biased toward basic and acidic residues; that stretch reads LVREQANRRH.

It belongs to the bacterial ribosomal protein bL35 family.

This chain is Large ribosomal subunit protein bL35, found in Corynebacterium efficiens (strain DSM 44549 / YS-314 / AJ 12310 / JCM 11189 / NBRC 100395).